A 92-amino-acid polypeptide reads, in one-letter code: RNA-binding protein Hfq (92 aa).

Residues 9-68 (DPFLNALRRERVPVSVYLVNGIKLQGTIESFDQFVVLLRNTVSQMVYKHAISTVVPARNV) form the Sm domain. A disordered region spans residues 72–92 (PGGGYVQSNENNQAEDDDVEQ).

It belongs to the Hfq family. Homohexamer.

RNA chaperone that binds small regulatory RNA (sRNAs) and mRNAs to facilitate mRNA translational regulation in response to envelope stress, environmental stress and changes in metabolite concentrations. Also binds with high specificity to tRNAs. This Xanthomonas campestris pv. campestris (strain 8004) protein is RNA-binding protein Hfq.